The primary structure comprises 732 residues: Catalase-peroxidase (732 aa).

A disordered region spans residues 1–23 (MSEQSRCPVTGRTADSPATGSGL). The segment at residues 97–220 (WHSAGTYRTS…LAAVQMGLIY (124 aa)) is a cross-link (tryptophyl-tyrosyl-methioninium (Trp-Tyr) (with M-246)). Catalysis depends on histidine 98, which acts as the Proton acceptor. The segment at residues 220–246 (YVNPEGPDGKPDPVAAGRDIRETFARM) is a cross-link (tryptophyl-tyrosyl-methioninium (Tyr-Met) (with W-97)). A heme b-binding site is contributed by histidine 261.

This sequence belongs to the peroxidase family. Peroxidase/catalase subfamily. As to quaternary structure, homodimer or homotetramer. Heme b serves as cofactor. In terms of processing, formation of the three residue Trp-Tyr-Met cross-link is important for the catalase, but not the peroxidase activity of the enzyme.

The enzyme catalyses H2O2 + AH2 = A + 2 H2O. The catalysed reaction is 2 H2O2 = O2 + 2 H2O. Functionally, bifunctional enzyme with both catalase and broad-spectrum peroxidase activity. The protein is Catalase-peroxidase of Prosthecochloris aestuarii (strain DSM 271 / SK 413).